Consider the following 387-residue polypeptide: MATREACGQFAAASAAMAAASSQNPSKATMTDPRFRIRPLQQVASACTGAMVTACFMTPLDVIKTRLQAQQQALLSNKCFLYCNGLMDHICPCGPDTPNPAAAKPAPRFSGTIDAFIKISRTEGIGSLWSGLSPTLISALPSTIIYFVAYEQFKARFTDIHYKYTRRPDTIAHDIPHPIPFLVPLLAGVSGRILAVTCVSPVELIRTKMQSQRMTHAEMFGTIRQVVQSQGVLGLWRGLPPTILRDVPFSGIYWTCYEYLKSSFGVVEPTFSFSFAAGAISGSVAATITTPFDVVKTHEQIEFGEKFIFSDNPPKQVATKSVAMRLASIYRMGGVPAIFSGLGPRLFKVAPACAIMISSFEYGKSFFYHYNIDQHNRSNQATKGPGS.

Solcar repeat units follow at residues 37 to 156 (IRPL…FKAR), 179 to 263 (IPFL…LKSS), and 269 to 366 (PTFS…GKSF). A run of 6 helical transmembrane segments spans residues 43-63 (VASA…LDVI), 128-148 (LWSG…IYFV), 179-199 (IPFL…VTCV), 235-255 (LWRG…IYWT), 275-295 (FAAG…FDVV), and 337-357 (AIFS…AIMI).

The protein belongs to the mitochondrial carrier (TC 2.A.29) family.

It is found in the mitochondrion inner membrane. In terms of biological role, mitochondrial transporter required for glutathione import into mitochondria. The polypeptide is Solute carrier family 25 protein Shawn (Drosophila melanogaster (Fruit fly)).